A 1155-amino-acid chain; its full sequence is DNA mismatch repair protein MLH3 (1155 aa).

The protein belongs to the DNA mismatch repair MutL/HexB family. In terms of assembly, heterodimer of MLH1 and MLH3, called MutLbeta, which is involved in correction of a specific subset of IDLs when associated with MutSbeta. As to expression, expressed in reproductive tissues.

The protein localises to the nucleus. Involved in DNA mismatch repair (MMR), correcting insertion-deletion loops (IDLs) resulting from DNA replication, DNA damage or from recombination events between non-identical sequences during meiosis. Component of the MutLbeta heterodimer, which probably forms a ternary complex with the MutSbeta heterodimer that initially recognizes the DNA mismatches. This complex is thought to be responsible for directing the downstream MMR events, including strand discrimination, excision, and resynthesis. Plays a major role in promoting meiotic crossing-over and is involved in maintaining the genetic stability of simple sequence repeats by correction of frameshift intermediates. In Arabidopsis thaliana (Mouse-ear cress), this protein is DNA mismatch repair protein MLH3 (MLH3).